The primary structure comprises 193 residues: Rho-related GTP-binding protein RhoA-A (193 aa).

GTP-binding positions include 12–19 (GDGACGKT), 30–37 (FPEVYVPT), 59–63 (DTAGQ), 117–120 (NKKD), and 160–162 (SAK). A (Microbial infection) O-linked (GlcNAc) tyrosine; by Yersinia Afp18 glycan is attached at Tyr-34. The residue at position 190 (Cys-190) is a Cysteine methyl ester. Cys-190 carries the S-geranylgeranyl cysteine lipid modification. Positions 191-193 (ALL) are cleaved as a propeptide — removed in mature form.

It belongs to the small GTPase superfamily. Rho family. Post-translationally, (Microbial infection) Glycosylated at Tyr-34 by Yersinia ruckeri toxin Afp18. Mono-O-GlcNAcylation by Afp18 inhibits RhoA activation by guanine nucleotide exchange factors and blocks RhoA signaling.

The protein localises to the cell membrane. Its function is as follows. Regulates a signal transduction pathway linking plasma membrane receptors to the assembly of focal adhesions and actin stress fibers. This is Rho-related GTP-binding protein RhoA-A from Danio rerio (Zebrafish).